The sequence spans 91 residues: MASISIRCPSCSATEGVVRNGKSTAGHQRYLCSPCRKTWQLQFTYTASQPGKHQKIIDMAMNGVGCRASARIMGVGLNTVLRHLKNSGRSR.

This sequence belongs to the IS1 elements InsA family.

Functionally, absolutely required for transposition of IS1. The polypeptide is Insertion element IS1 7 protein InsA (insA7) (Escherichia coli (strain K12)).